Consider the following 459-residue polypeptide: Exodeoxyribonuclease 7 large subunit (459 aa).

The protein belongs to the XseA family. Heterooligomer composed of large and small subunits.

The protein resides in the cytoplasm. It catalyses the reaction Exonucleolytic cleavage in either 5'- to 3'- or 3'- to 5'-direction to yield nucleoside 5'-phosphates.. In terms of biological role, bidirectionally degrades single-stranded DNA into large acid-insoluble oligonucleotides, which are then degraded further into small acid-soluble oligonucleotides. This Pseudomonas fluorescens (strain Pf0-1) protein is Exodeoxyribonuclease 7 large subunit.